The chain runs to 124 residues: Small ribosomal subunit protein uS12 (124 aa).

The tract at residues 1–23 (MATINQLVRKPRVRQKQKSNVPA) is disordered. D89 bears the 3-methylthioaspartic acid mark. The segment at 103–124 (DTAGVGDRRQGRSKYGAKRPKG) is disordered. The span at 113–124 (GRSKYGAKRPKG) shows a compositional bias: basic residues.

This sequence belongs to the universal ribosomal protein uS12 family. As to quaternary structure, part of the 30S ribosomal subunit. Contacts proteins S8 and S17. May interact with IF1 in the 30S initiation complex.

With S4 and S5 plays an important role in translational accuracy. In terms of biological role, interacts with and stabilizes bases of the 16S rRNA that are involved in tRNA selection in the A site and with the mRNA backbone. Located at the interface of the 30S and 50S subunits, it traverses the body of the 30S subunit contacting proteins on the other side and probably holding the rRNA structure together. The combined cluster of proteins S8, S12 and S17 appears to hold together the shoulder and platform of the 30S subunit. This chain is Small ribosomal subunit protein uS12, found in Nitrosococcus oceani (strain ATCC 19707 / BCRC 17464 / JCM 30415 / NCIMB 11848 / C-107).